The chain runs to 399 residues: Lysosomal acid lipase/cholesteryl ester hydrolase (399 aa).

Residues 1–27 form the signal peptide; that stretch reads MKMRFLGLVVCLVLWTLHSEGSGGKLT. A propeptide spans 28–76 (removed in mature form); it reads AVDPETNMNVSEIISYWGFPSEEYLVETEDGYILCLNRIPHGRKNHSDK. N-linked (GlcNAc...) asparagine glycans are attached at residues N36, N72, N101, and N161. The AB hydrolase-1 domain occupies 80-380; it reads PVVFLQHGLL…EWEHLDFIWG (301 aa). S174 serves as the catalytic Charge relay system. 2 N-linked (GlcNAc...) asparagine glycosylation sites follow: N273 and N321. Catalysis depends on H374, which acts as the Charge relay system.

The protein belongs to the AB hydrolase superfamily. Lipase family. In terms of assembly, monomer. Post-translationally, glycosylation is not essential for catalytic activity. In terms of tissue distribution, most abundantly expressed in brain, lung, kidney and mammary gland, a moderate expression seen in placenta and expressed at low levels in the liver and heart.

It is found in the lysosome. The catalysed reaction is a sterol ester + H2O = a sterol + a fatty acid + H(+). It carries out the reaction cholesteryl (9Z-octadecenoate) + H2O = cholesterol + (9Z)-octadecenoate + H(+). It catalyses the reaction a triacylglycerol + H2O = a 1,2-diacylglycerol + a fatty acid + H(+). The enzyme catalyses 1,2-di-(9Z-octadecenoyl)-glycerol + (9Z)-octadecenoate + H(+) = 1,2,3-tri-(9Z-octadecenoyl)-glycerol + H2O. The catalysed reaction is a 1,2-diacylglycerol + H2O = a 1-acylglycerol + a fatty acid + H(+). It carries out the reaction 1,2-di-(9Z-octadecenoyl)-glycerol + H2O = 1-(9Z-octadecenoyl)-glycerol + (9Z)-octadecenoate + H(+). It catalyses the reaction a 1,3-diacylglycerol + H2O = a 1-acylglycerol + a fatty acid + H(+). The enzyme catalyses 1,3-di-(9Z-octadecenoyl)-glycerol + H2O = 1-(9Z-octadecenoyl)-glycerol + (9Z)-octadecenoate + H(+). Functionally, catalyzes the deacylation of cholesteryl ester core lipids of endocytosed low density lipoproteins to generate free fatty acids and cholesterol. Hydrolyzes triglycerides (1,2,3-triacylglycerol) and diglycerides (such as 1,2-diacylglycerol and 1,3-diacylglycerol) with preference for the acyl moieties at the sn-1 or sn-3 positions. The chain is Lysosomal acid lipase/cholesteryl ester hydrolase (LIPA) from Homo sapiens (Human).